A 151-amino-acid polypeptide reads, in one-letter code: Transcriptional repressor NrdR (151 aa).

The segment at 3 to 34 (CPFCSHPDTQVVETREAEDGGFIRRRRQCGGC) is a zinc-finger region. The ATP-cone domain occupies 49–139 (PAIVKKDGRR…VYRSFEDVDD (91 aa)).

It belongs to the NrdR family. Zn(2+) serves as cofactor.

Functionally, negatively regulates transcription of bacterial ribonucleotide reductase nrd genes and operons by binding to NrdR-boxes. The protein is Transcriptional repressor NrdR of Delftia acidovorans (strain DSM 14801 / SPH-1).